A 145-amino-acid chain; its full sequence is uncharacterized protein (145 aa).

Residues 71–95 are disordered; that stretch reads GARGRGRTYTKGGSSRSPASWAEQG.

This is an uncharacterized protein from Homo sapiens (Human).